A 285-amino-acid chain; its full sequence is Secreted LysM effector slp2 (285 aa).

An N-terminal signal peptide occupies residues 1–16; the sequence is MLPITVVTLFAALAAA. The interval 75-143 is disordered; the sequence is GDAAKAGDAA…KGGDAAKGGN (69 aa). Residues 85-116 are compositionally biased toward basic and acidic residues; the sequence is KGGDAKGGDAKGGDAKGGDAKGGKGGDAKGGK. Residues 117-139 are compositionally biased toward gly residues; it reads GGDAAKGGKGGDAAKGGKGGDAA. LysM domains are found at residues 157-201 and 237-281; these read VEHK…VLKI and FTRV…TINL.

The protein belongs to the secreted LysM effector family.

Its function is as follows. Might have a role in sequestration of chitin oligosaccharides (breakdown products of fungal cell walls that are released during invasion and act as triggers of host immunity) to dampen host defense. This is Secreted LysM effector slp2 from Pyricularia oryzae (strain 70-15 / ATCC MYA-4617 / FGSC 8958) (Rice blast fungus).